A 495-amino-acid chain; its full sequence is UDP-N-acetylmuramoyl-L-alanyl-D-glutamate--2,6-diaminopimelate ligase (495 aa).

Residues L27, S29, and 44 to 46 contribute to the UDP-N-acetyl-alpha-D-muramoyl-L-alanyl-D-glutamate site; that span reads HQA. 116–122 contributes to the ATP binding site; the sequence is GTNGKTT. UDP-N-acetyl-alpha-D-muramoyl-L-alanyl-D-glutamate is bound by residues N157, 158 to 159, S185, Q191, and R193; that span reads TT. The residue at position 225 (K225) is an N6-carboxylysine. Meso-2,6-diaminopimelate-binding positions include R390, 414 to 417, G465, and E469; that span reads DNPR. The Meso-diaminopimelate recognition motif motif lies at 414–417; that stretch reads DNPR.

This sequence belongs to the MurCDEF family. MurE subfamily. The cofactor is Mg(2+). Post-translationally, carboxylation is probably crucial for Mg(2+) binding and, consequently, for the gamma-phosphate positioning of ATP.

The protein resides in the cytoplasm. The catalysed reaction is UDP-N-acetyl-alpha-D-muramoyl-L-alanyl-D-glutamate + meso-2,6-diaminopimelate + ATP = UDP-N-acetyl-alpha-D-muramoyl-L-alanyl-gamma-D-glutamyl-meso-2,6-diaminopimelate + ADP + phosphate + H(+). It functions in the pathway cell wall biogenesis; peptidoglycan biosynthesis. Catalyzes the addition of meso-diaminopimelic acid to the nucleotide precursor UDP-N-acetylmuramoyl-L-alanyl-D-glutamate (UMAG) in the biosynthesis of bacterial cell-wall peptidoglycan. The chain is UDP-N-acetylmuramoyl-L-alanyl-D-glutamate--2,6-diaminopimelate ligase from Salmonella paratyphi A (strain ATCC 9150 / SARB42).